Reading from the N-terminus, the 361-residue chain is Small ribosomal subunit protein mS46 (361 aa).

A mitochondrion-targeting transit peptide spans 1–14; the sequence is MRSSMFRCVSRAHY. The interval 37–99 is disordered; the sequence is ASSNALKLDK…SDSVRANKQQ (63 aa). The segment covering 43–52 has biased composition (basic and acidic residues); it reads KLDKMKEGRM. Residues 59 to 68 show a composition bias toward low complexity; sequence GNQNRNSMNN. The span at 69 to 91 shows a compositional bias: basic and acidic residues; the sequence is KESRGREGNQGERNMRLKNRSSD.

The protein belongs to the mitochondrion-specific ribosomal protein mS46 family. As to quaternary structure, component of the mitochondrial small ribosomal subunit (mt-SSU). Mature yeast 74S mitochondrial ribosomes consist of a small (37S) and a large (54S) subunit. The 37S small subunit contains a 15S ribosomal RNA (15S mt-rRNA) and 34 different proteins. The 54S large subunit contains a 21S rRNA (21S mt-rRNA) and 46 different proteins.

It localises to the mitochondrion. Its function is as follows. Component of the mitochondrial ribosome (mitoribosome), a dedicated translation machinery responsible for the synthesis of mitochondrial genome-encoded proteins, including at least some of the essential transmembrane subunits of the mitochondrial respiratory chain. The mitoribosomes are attached to the mitochondrial inner membrane and translation products are cotranslationally integrated into the membrane. The polypeptide is Small ribosomal subunit protein mS46 (RSM28) (Saccharomyces cerevisiae (strain ATCC 204508 / S288c) (Baker's yeast)).